Consider the following 526-residue polypeptide: Bifunctional purine biosynthesis protein PurH (526 aa).

Residues 1-145 (MIRTALLSVS…KNHQDVTVLI (145 aa)) form the MGS-like domain.

It belongs to the PurH family.

The enzyme catalyses (6R)-10-formyltetrahydrofolate + 5-amino-1-(5-phospho-beta-D-ribosyl)imidazole-4-carboxamide = 5-formamido-1-(5-phospho-D-ribosyl)imidazole-4-carboxamide + (6S)-5,6,7,8-tetrahydrofolate. The catalysed reaction is IMP + H2O = 5-formamido-1-(5-phospho-D-ribosyl)imidazole-4-carboxamide. It functions in the pathway purine metabolism; IMP biosynthesis via de novo pathway; 5-formamido-1-(5-phospho-D-ribosyl)imidazole-4-carboxamide from 5-amino-1-(5-phospho-D-ribosyl)imidazole-4-carboxamide (10-formyl THF route): step 1/1. The protein operates within purine metabolism; IMP biosynthesis via de novo pathway; IMP from 5-formamido-1-(5-phospho-D-ribosyl)imidazole-4-carboxamide: step 1/1. In Polynucleobacter asymbioticus (strain DSM 18221 / CIP 109841 / QLW-P1DMWA-1) (Polynucleobacter necessarius subsp. asymbioticus), this protein is Bifunctional purine biosynthesis protein PurH.